Consider the following 228-residue polypeptide: L-ribulose-5-phosphate 4-epimerase UlaF (228 aa).

Substrate contacts are provided by residues glycine 26–asparagine 27, serine 43–glycine 44, and serine 72–serine 73. Residues aspartate 74, histidine 93, and histidine 95 each contribute to the Zn(2+) site. Aspartate 118 acts as the Proton donor/acceptor in catalysis. Histidine 167 serves as a coordination point for Zn(2+). Tyrosine 225 (proton donor/acceptor) is an active-site residue.

The protein belongs to the aldolase class II family. AraD/FucA subfamily. The cofactor is Zn(2+).

The catalysed reaction is L-ribulose 5-phosphate = D-xylulose 5-phosphate. It participates in cofactor degradation; L-ascorbate degradation; D-xylulose 5-phosphate from L-ascorbate: step 4/4. In terms of biological role, catalyzes the isomerization of L-ribulose 5-phosphate to D-xylulose 5-phosphate. Is involved in the anaerobic L-ascorbate utilization. In Escherichia coli O81 (strain ED1a), this protein is L-ribulose-5-phosphate 4-epimerase UlaF.